The chain runs to 572 residues: Excitatory amino acid transporter 2 (572 aa).

Positions 1-11 (MASTEGANNMP) are enriched in polar residues. The segment at 1–28 (MASTEGANNMPKQVEVRMHDSHLSSDEP) is disordered. Topologically, residues 1–44 (MASTEGANNMPKQVEVRMHDSHLSSDEPKHRNLGMRMCDKLGKN) are cytoplasmic. Phosphoserine occurs at positions 3, 21, 24, and 25. The segment covering 14–28 (VEVRMHDSHLSSDEP) has biased composition (basic and acidic residues). C38 is lipidated: S-palmitoyl cysteine. 3 helical membrane passes run 45–64 (LLLS…GGLL), 88–108 (MLKM…LSGL), and 121–142 (MVYY…VLAI). N205 and N215 each carry an N-linked (GlcNAc...) asparagine glycan. Helical transmembrane passes span 235-258 (FKDG…MGKM), 268-295 (FFNI…ACLI), and 317-338 (ITVI…YFVV). Residues 344–374 (FSFFAGIFQAWITALGTASSAGTLPVTFRCL) constitute an intramembrane region (discontinuously helical). 361–363 (ASS) lines the L-aspartate pocket. Residues 384 to 410 (VTRFVLPVGATINMDGTALYEAVAAIF) form a helical membrane-spanning segment. G392, T394, and N396 together coordinate Na(+). L-aspartate is bound by residues T400, 441 to 445 (IPSAG), D474, and N481. Residues 424–457 (IVTVSLTATLASIGAASIPSAGLVTMLLILTAVG) constitute an intramembrane region (discontinuously helical). A helical transmembrane segment spans residues 471 to 492 (WLLDRMRTSVNVVGDSFGAGIV). Residues N481 and D485 each contribute to the Na(+) site. Residues S505, S520, S530, and S532 each carry the phosphoserine modification. Phosphotyrosine is present on Y537. Residues S542, S558, and S562 each carry the phosphoserine modification.

The protein belongs to the dicarboxylate/amino acid:cation symporter (DAACS) (TC 2.A.23) family. SLC1A2 subfamily. Homotrimer. Interacts with AJUBA. Post-translationally, glycosylated. In terms of processing, palmitoylation at Cys-38 is not required for correct subcellular localization, but is important for glutamate uptake activity. In terms of tissue distribution, detected in brain. Detected in embryonic forebrain, especially in globus pallidus, perirhinal cortex, lateral hypothalamus, hippocampus, and on fimbria and axonal pathways connecting the neocortex, basal ganglia and thalamus (at protein level). Isoform GLT1 is expressed in the brain. Isoforms GLT-1A and GLT-1B are expressed in the liver.

Its subcellular location is the cell membrane. The catalysed reaction is K(+)(in) + L-glutamate(out) + 3 Na(+)(out) + H(+)(out) = K(+)(out) + L-glutamate(in) + 3 Na(+)(in) + H(+)(in). It carries out the reaction K(+)(in) + L-aspartate(out) + 3 Na(+)(out) + H(+)(out) = K(+)(out) + L-aspartate(in) + 3 Na(+)(in) + H(+)(in). It catalyses the reaction D-aspartate(out) + K(+)(in) + 3 Na(+)(out) + H(+)(out) = D-aspartate(in) + K(+)(out) + 3 Na(+)(in) + H(+)(in). Functionally, sodium-dependent, high-affinity amino acid transporter that mediates the uptake of L-glutamate and also L-aspartate and D-aspartate. Functions as a symporter that transports one amino acid molecule together with two or three Na(+) ions and one proton, in parallel with the counter-transport of one K(+) ion. Mediates Cl(-) flux that is not coupled to amino acid transport; this avoids the accumulation of negative charges due to aspartate and Na(+) symport. Essential for the rapid removal of released glutamate from the synaptic cleft, and for terminating the postsynaptic action of glutamate. This chain is Excitatory amino acid transporter 2 (Slc1a2), found in Mus musculus (Mouse).